The chain runs to 2517 residues: Cullin-9 (2517 aa).

Residue K87 forms a Glycyl lysine isopeptide (Lys-Gly) (interchain with G-Cter in ubiquitin) linkage. Over residues 276 to 288 (SPELGAGDQSSPC) the composition is skewed to polar residues. The disordered stretch occupies residues 276–296 (SPELGAGDQSSPCATREKSRG). Residues 366-439 (RSEFSSRSGY…HWHMLEILGP (74 aa)) form the CPH domain. Positions 576 to 589 (SNEPSSSSTSRNHS) are enriched in low complexity. Residues 576-639 (SNEPSSSSTS…TETPMAQSDS (64 aa)) are disordered. Positions 593–609 (DPEEESKSEASFSEEET) are enriched in acidic residues. Residues 610 to 630 (ESLKAKAEAPKTEAEPTKTRT) show a composition bias toward basic and acidic residues. At S976 the chain carries Phosphoserine. Residues 1143-1322 (PINIPFFDVF…RTCLFYTIRA (180 aa)) enclose the DOC domain. Residue 1363–1370 (AAQALGKT) coordinates ATP. Disordered regions lie at residues 1432–1466 (VEPP…VLPS) and 1664–1685 (DEEE…AEKE). The span at 1433-1443 (EPPPGPSPEPS) shows a compositional bias: pro residues. S1457 is subject to Phosphoserine. Residues 1649 to 1691 (LFQLQRLDKLFLEQEDEEEKRLEEEEEEEEEEEAEKELFIEDP) are a coiled coil. Acidic residues predominate over residues 1664–1683 (DEEEKRLEEEEEEEEEEEAE). Residue K1881 forms a Glycyl lysine isopeptide (Lys-Gly) (interchain with G-Cter in NEDD8) linkage. Residues 2066-2283 (RPDHCPVCVS…KDYYNCSAMV (218 aa)) are TRIAD supradomain. 18 residues coordinate Zn(2+): C2070, C2073, C2088, H2090, C2093, C2096, C2115, C2120, C2160, C2166, C2181, C2184, C2189, C2192, H2198, C2203, C2236, and C2239. The RING-type 1 zinc-finger motif lies at 2070–2120 (CPVCVSPLGCDDDLPSLCCMHYCCKSCWNEYLTTRIEQNLVLNCTCPIADC). An IBR-type zinc finger spans residues 2140 to 2203 (SKYEKALLRG…FPEAHYPASC (64 aa)). An RING-type 2; atypical zinc finger spans residues 2236–2265 (CPSCQAPIEKNEGCLHMTCAKCNHGFCWRC). C2249 is an active-site residue. Zn(2+)-binding residues include C2254, C2257, C2262, C2265, H2273, and C2279. Residues 2365–2385 (VEQQTENLELHTNALQILLEE) adopt a coiled-coil conformation. S2436 is modified (phosphoserine). The interval 2442–2517 (WEAKGPNMPG…EEEDEDEAYD (76 aa)) is disordered. 2 stretches are compositionally biased toward acidic residues: residues 2461-2499 (EAEE…ENLD) and 2506-2517 (GDEEEDEDEAYD).

It belongs to the cullin family. In terms of assembly, component of the Cul9-RING complex consisting of CUL9 and RBX1; the CUL9-RBX1 complex is a heterododecamer composed of six CUL9 and six RBX1 protomers. Interacts (via C-terminal TRIAD/RBR supradomain) with E2 ubiquitin-conjugating enzyme UBE2L3. Interacts with CUL7; the interaction with the CUL7 component of the 3M complex leads to inhibition of CUL9 activity. The CUL7-CUL9 heterodimer seems to interact specifically with TP53, likely via the CPH domain. Forms a complex with p53/TP53 in the cytoplasm of unstressed cells. Interacts with UBCH7 and UBCH8. Post-translationally, autoubiquitinated by the CUL9-RBX1 complex at Lys-87. In terms of processing, neddylated. Neddylation is mediated by E1 enzyme UBA3-NAE1 complex and E2 enzyme UBE2F. Structural rearrangment of the C-terminal TRIAD/RBR supradomain may play a role in neddylation and deneddylation. As to expression, ubiquitously expressed in all tissues with highest expression in testis brain and kidney.

The protein resides in the cytoplasm. Functionally, core component of a Cul9-RING ubiquitin-protein ligase complex composed of CUL9 and RBX1. The CUL9-RBX1 complex mediates ubiquitination and subsequent degradation of BIRC5 and is required to maintain microtubule dynamics and genome integrity. Acts downstream of the 3M complex, which inhibits the ubiquitination of BIRC5. The CUL9-RBX1 complex also mediates mono-ubiquitination of p53/TP53. Acts as a cytoplasmic anchor protein in p53/TP53-associated protein complex. Regulates the subcellular localization of p53/TP53 and its subsequent function. Ubiquitinates apurinic/apyrimidinic endodeoxyribonuclease APEX2. Ubiquitination by the CUL9-RBX1 complex is predominantly mediated by E2 ubiquitin-conjugating enzymes UBE2L3 and UBE2D2. This Homo sapiens (Human) protein is Cullin-9 (CUL9).